The sequence spans 218 residues: Small ribosomal subunit protein uS3 (218 aa).

Methionine 1 bears the N-acetylmethionine mark. Residues 23–95 (LNELFTREFN…TVVLFAEKIL (73 aa)) enclose the KH type-2 domain.

This sequence belongs to the universal ribosomal protein uS3 family.

The polypeptide is Small ribosomal subunit protein uS3 (rps3) (Dictyostelium discoideum (Social amoeba)).